The following is a 375-amino-acid chain: Succinyl-diaminopimelate desuccinylase (375 aa).

Histidine 66 is a Zn(2+) binding site. Residue aspartate 68 is part of the active site. Aspartate 99 contributes to the Zn(2+) binding site. The Proton acceptor role is filled by glutamate 133. Glutamate 134, glutamate 162, and histidine 348 together coordinate Zn(2+).

Belongs to the peptidase M20A family. DapE subfamily. In terms of assembly, homodimer. The cofactor is Zn(2+). Co(2+) serves as cofactor.

The catalysed reaction is N-succinyl-(2S,6S)-2,6-diaminopimelate + H2O = (2S,6S)-2,6-diaminopimelate + succinate. It functions in the pathway amino-acid biosynthesis; L-lysine biosynthesis via DAP pathway; LL-2,6-diaminopimelate from (S)-tetrahydrodipicolinate (succinylase route): step 3/3. Its function is as follows. Catalyzes the hydrolysis of N-succinyl-L,L-diaminopimelic acid (SDAP), forming succinate and LL-2,6-diaminopimelate (DAP), an intermediate involved in the bacterial biosynthesis of lysine and meso-diaminopimelic acid, an essential component of bacterial cell walls. This chain is Succinyl-diaminopimelate desuccinylase, found in Klebsiella pneumoniae subsp. pneumoniae (strain ATCC 700721 / MGH 78578).